Consider the following 328-residue polypeptide: Beta-ketoacyl-[acyl-carrier-protein] synthase III (328 aa).

Catalysis depends on residues C114 and H253. The tract at residues 254–258 is ACP-binding; that stretch reads QANIR. N283 is a catalytic residue.

This sequence belongs to the thiolase-like superfamily. FabH family. Homodimer.

It localises to the cytoplasm. The catalysed reaction is malonyl-[ACP] + acetyl-CoA + H(+) = 3-oxobutanoyl-[ACP] + CO2 + CoA. Its pathway is lipid metabolism; fatty acid biosynthesis. Functionally, catalyzes the condensation reaction of fatty acid synthesis by the addition to an acyl acceptor of two carbons from malonyl-ACP. Catalyzes the first condensation reaction which initiates fatty acid synthesis and may therefore play a role in governing the total rate of fatty acid production. Possesses both acetoacetyl-ACP synthase and acetyl transacylase activities. Its substrate specificity determines the biosynthesis of branched-chain and/or straight-chain of fatty acids. The chain is Beta-ketoacyl-[acyl-carrier-protein] synthase III from Clostridioides difficile (strain 630) (Peptoclostridium difficile).